Here is a 97-residue protein sequence, read N- to C-terminus: Large ribosomal subunit protein uL23 (97 aa).

Belongs to the universal ribosomal protein uL23 family. As to quaternary structure, part of the 50S ribosomal subunit. Contacts protein L29, and trigger factor when it is bound to the ribosome.

In terms of biological role, one of the early assembly proteins it binds 23S rRNA. One of the proteins that surrounds the polypeptide exit tunnel on the outside of the ribosome. Forms the main docking site for trigger factor binding to the ribosome. The protein is Large ribosomal subunit protein uL23 of Chelativorans sp. (strain BNC1).